Reading from the N-terminus, the 366-residue chain is Aminomethyltransferase (366 aa).

Belongs to the GcvT family. The glycine cleavage system is composed of four proteins: P, T, L and H.

The catalysed reaction is N(6)-[(R)-S(8)-aminomethyldihydrolipoyl]-L-lysyl-[protein] + (6S)-5,6,7,8-tetrahydrofolate = N(6)-[(R)-dihydrolipoyl]-L-lysyl-[protein] + (6R)-5,10-methylene-5,6,7,8-tetrahydrofolate + NH4(+). In terms of biological role, the glycine cleavage system catalyzes the degradation of glycine. This Sodalis glossinidius (strain morsitans) protein is Aminomethyltransferase.